The chain runs to 125 residues: uncharacterized protein (125 aa).

A run of 2 helical transmembrane segments spans residues 22 to 44 (TPLM…NAAV) and 54 to 73 (YMGI…SVLM).

Belongs to the bacteriophage holin family. Cp-1 holin subfamily.

It is found in the cell membrane. This is an uncharacterized protein from Clostridium acetobutylicum (strain ATCC 824 / DSM 792 / JCM 1419 / IAM 19013 / LMG 5710 / NBRC 13948 / NRRL B-527 / VKM B-1787 / 2291 / W).